The sequence spans 430 residues: Asparagine--tRNA ligase (430 aa).

The protein belongs to the class-II aminoacyl-tRNA synthetase family. As to quaternary structure, homodimer.

It localises to the cytoplasm. The enzyme catalyses tRNA(Asn) + L-asparagine + ATP = L-asparaginyl-tRNA(Asn) + AMP + diphosphate + H(+). This is Asparagine--tRNA ligase from Staphylococcus aureus (strain USA300).